We begin with the raw amino-acid sequence, 151 residues long: UPAR/Ly6 domain-containing protein rtv (151 aa).

An N-terminal signal peptide occupies residues 1-19 (MQFTSLLLAVIFLISLVSI). The Extracellular segment spans residues 20–125 (DGLLRRCYQC…QGDLCNGARS (106 aa)). 5 cysteine pairs are disulfide-bonded: cysteine 26/cysteine 65, cysteine 29/cysteine 38, cysteine 60/cysteine 88, cysteine 100/cysteine 113, and cysteine 115/cysteine 120. An N-linked (GlcNAc...) asparagine glycan is attached at asparagine 45. Asparagine 121 carries GPI-anchor amidated asparagine lipidation. Residues 122–151 (GARSWSSAPQMILITMLPLLGSWLLQRMRN) constitute a propeptide, removed in mature form. The chain crosses the membrane as a helical span at residues 126 to 146 (WSSAPQMILITMLPLLGSWLL). At 147 to 151 (QRMRN) the chain is on the cytoplasmic side.

This sequence belongs to the quiver family.

The protein localises to the cell membrane. Required for chitin fiber assembly and organization involved in cuticle formation and tracheal development. The sequence is that of UPAR/Ly6 domain-containing protein rtv from Drosophila melanogaster (Fruit fly).